Here is a 199-residue protein sequence, read N- to C-terminus: Recombination protein RecR (199 aa).

The segment at 57–72 (CNLCNNFSEQEICPLC) adopts a C4-type zinc-finger fold. The 96-residue stretch at 80-175 (TLLCIVEMPS…QVSRIARGLP (96 aa)) folds into the Toprim domain.

It belongs to the RecR family.

Functionally, may play a role in DNA repair. It seems to be involved in an RecBC-independent recombinational process of DNA repair. It may act with RecF and RecO. The polypeptide is Recombination protein RecR (Methylobacillus flagellatus (strain ATCC 51484 / DSM 6875 / VKM B-1610 / KT)).